The sequence spans 1437 residues: Envelopment polyprotein (1437 aa).

An N-terminal signal peptide occupies residues 1 to 21 (MAISTSLLIVALLIKLCLVNT). Topologically, residues 22 to 207 (APPISKCFQD…GYMASSICQN (186 aa)) are lumenal. N65 and N88 each carry an N-linked (GlcNAc...) asparagine; by host glycan. Residues 208–228 (IELIIIIILTLAIFIFMCIIT) form a helical membrane-spanning segment. Topologically, residues 229–312 (RTYICYLMLP…RVARSLCKSK (84 aa)) are cytoplasmic. Residues 313-333 (GSSLVISILTAMLILSFITPL) form a helical membrane-spanning segment. Residues 334–373 (EAMTTNYPDDKKFTLKEVNDIVLGRDMEQELKSSILILMS) lie on the Lumenal side of the membrane. The helical transmembrane segment at 374–394 (ICGIGIILIFFGLTVLLEIVL) threads the bilayer. Residues 395 to 460 (ELIAKRSTIF…TYYIKIRNLK (66 aa)) are Cytoplasmic-facing. A helical membrane pass occupies residues 461 to 481 (LIMLIFSIVILMQNATMLVVA). At 482 to 1391 (GENCWTNTEI…EPLNNFFGNY (910 aa)) the chain is on the lumenal side. Residues N627 and N1173 are each glycosylated (N-linked (GlcNAc...) asparagine; by host). A helical membrane pass occupies residues 1392-1412 (LNMFLYILGGIILLFLALYIL). The Cytoplasmic segment spans residues 1413–1437 (MPMCARLRDELKRNERLHQMEMKKR).

The protein belongs to the orthobunyavirus envelope glycoprotein family. Glycoprotein C and Glycoprotein N interact with each other. Specific enzymatic cleavages in vivo yield mature proteins including nonstructural protein NSm, Glycoprotein C, and Glycoprotein N.

The protein localises to the virion membrane. The protein resides in the host Golgi apparatus membrane. Its subcellular location is the host endoplasmic reticulum membrane. Glycoprotein C and Glycoprotein N interact with each other and are present at the surface of the virion. They are able to attach the virion to a cell receptor and to promote fusion of membranes after endocytosis of the virion. The polypeptide is Envelopment polyprotein (GP) (Culex).